The sequence spans 244 residues: Lipoprotein-releasing system ATP-binding protein LolD (244 aa).

One can recognise an ABC transporter domain in the interval 19–244 (IRAEALAKTY…KLRELAPSAV (226 aa)). An ATP-binding site is contributed by 55–62 (GASGAGKS).

This sequence belongs to the ABC transporter superfamily. Lipoprotein translocase (TC 3.A.1.125) family. As to quaternary structure, the complex is composed of two ATP-binding proteins (LolD) and two transmembrane proteins (LolC and LolE).

Its subcellular location is the cell inner membrane. Its function is as follows. Part of the ABC transporter complex LolCDE involved in the translocation of mature outer membrane-directed lipoproteins, from the inner membrane to the periplasmic chaperone, LolA. Responsible for the formation of the LolA-lipoprotein complex in an ATP-dependent manner. The sequence is that of Lipoprotein-releasing system ATP-binding protein LolD from Xanthomonas oryzae pv. oryzae (strain MAFF 311018).